Here is a 710-residue protein sequence, read N- to C-terminus: Aminopeptidase P2 (710 aa).

A chloroplast-targeting transit peptide spans 1–79; sequence MIPLTLSSPS…IRKAQTKVVV (79 aa). Positions 147 and 486 each coordinate a peptide. Residues D506, D517, and H580 each coordinate Mn(2+). The a peptide site is built by H580, H589, and E614. Mn(2+) is bound by residues E614 and E628.

This sequence belongs to the peptidase M24B family. In terms of assembly, homodimer. Mn(2+) is required as a cofactor.

Its subcellular location is the plastid. The protein resides in the chloroplast. The catalysed reaction is Release of any N-terminal amino acid, including proline, that is linked to proline, even from a dipeptide or tripeptide.. Its function is as follows. Catalyzes the removal of a penultimate prolyl residue from the N-termini of peptides, such as Arg-Pro-Pro. This chain is Aminopeptidase P2, found in Arabidopsis thaliana (Mouse-ear cress).